A 776-amino-acid polypeptide reads, in one-letter code: Hepatocyte growth factor-regulated tyrosine kinase substrate (776 aa).

The region spanning 15–143 (ATSQLLLETD…IMKVEGHVFP (129 aa)) is the VHS domain. The segment at 160-220 (WVDAEECHRC…VCEPCYEQLN (61 aa)) adopts an FYVE-type zinc-finger fold. Zn(2+)-binding residues include Cys-166, Cys-169, Cys-182, Cys-185, Cys-190, and Cys-193. Lys-207 carries the N6-acetyllysine modification. Zn(2+) contacts are provided by Cys-212 and Cys-215. Tyr-216 is subject to Phosphotyrosine. The tract at residues 223-319 (AEGKAASTTE…SPVNSSAPLA (97 aa)) is disordered. The segment at 225-542 (GKAASTTELP…QRLQEQEKER (318 aa)) is interaction with SNX1. The UIM domain maps to 258–277 (QEEEELQLALALSQSEAEEK). Residues 294-311 (PAPLASSAPPAGSLYSSP) are compositionally biased toward low complexity. Tyr-308, Tyr-329, and Tyr-334 each carry phosphotyrosine. The interval 338–401 (KQEEARKSPT…SEQYQNGESE (64 aa)) is disordered. Residues 379–398 (TDSQPITSCSGPFSEQYQNG) are compositionally biased toward polar residues. Positions 444 to 542 (SINSTHPQLL…QRLQEQEKER (99 aa)) are interaction with SNAP25 and TRAK2. Positions 453-571 (LELLNRLDER…FPLPYAQLQA (119 aa)) are interaction with STAM. The segment at 479 to 776 (ARGALSALRE…GNETQLISFD (298 aa)) is interaction with NF2. Lys-550 bears the N6-succinyllysine mark. Residues 719–776 (GQDASLPAQQPYITGQQPMYQQMAPSTGPPQQQPPVAQPPPTQGPPAQGNETQLISFD) are disordered. The segment covering 725–743 (PAQQPYITGQQPMYQQMAP) has biased composition (polar residues). A compositionally biased stretch (pro residues) spans 745-762 (TGPPQQQPPVAQPPPTQG). Over residues 767 to 776 (GNETQLISFD) the composition is skewed to polar residues.

In terms of assembly, component of the ESCRT-0 complex composed of STAM or STAM2 and HGS. Part of a complex at least composed of HSG, STAM2 (or probably STAM) and EPS15. Interacts with STAM. Interacts with STAM2. Interacts with EPS15; the interaction is direct, calcium-dependent and inhibited by SNAP25. Identified in a complex with STAM and LITAF. Found in a complex with STAM and E3 ligase ITCH and DTX3L. Interacts with E3 ligase DTX3L; the interaction brings together STAM and HSG, promotes their recruitment to early endosomes and decreases STAM and HGS ubiquitination by ITCH. Interacts with NF2; the interaction is direct. Interacts with ubiquitin; the interaction is direct. Interacts with VPS37C. Interacts with SMAD1, SMAD2 and SMAD3. Interacts with TSG101; the interaction mediates the association with the ESCRT-I complex. Interacts with SNAP25; the interaction is direct and decreases with addition of increasing concentrations of free calcium. Interacts with SNX1; the interaction is direct. Component of a 550 kDa membrane complex at least composed of HGS and SNX1 but excluding EGFR. Interacts with TRAK2. Interacts with TRAK1. Component of the CART complex, at least composed of ACTN4, HGS/HRS, MYO5B and TRIM3. Interacts (via UIM domain) with UBQLN1 (via ubiquitin-like domain). Interacts with ARRDC3. Identified in a complex containing at least ARRDC4, AVPR2 and HGS. Interacts with LAPTM4B; promotes HGS ubiquitination. Phosphorylated on Tyr-334. This phosphorylation occurs in response to EGF. A minor site of phosphorylation on Tyr-329 is detected. Protein phosphorylation may also be triggered in response to IL-2, GM-CSF and HGF. Post-translationally, ubiquitinated by ITCH. Ubiquitously expressed.

The protein resides in the cytoplasm. The protein localises to the early endosome membrane. Its subcellular location is the endosome. It is found in the multivesicular body membrane. Involved in intracellular signal transduction mediated by cytokines and growth factors. When associated with STAM, it suppresses DNA signaling upon stimulation by IL-2 and GM-CSF. Could be a direct effector of PI3-kinase in vesicular pathway via early endosomes and may regulate trafficking to early and late endosomes by recruiting clathrin. May concentrate ubiquitinated receptors within clathrin-coated regions. Involved in down-regulation of receptor tyrosine kinase via multivesicular body (MVBs) when complexed with STAM (ESCRT-0 complex). The ESCRT-0 complex binds ubiquitin and acts as a sorting machinery that recognizes ubiquitinated receptors and transfers them to further sequential lysosomal sorting/trafficking processes. Involved in receptor recycling via its association with the CART complex, a multiprotein complex required for efficient transferrin receptor recycling but not for EGFR degradation. May contribute to the efficient recruitment of SMADs to the activin receptor complex. The sequence is that of Hepatocyte growth factor-regulated tyrosine kinase substrate (Hgs) from Rattus norvegicus (Rat).